The chain runs to 64 residues: uncharacterized protein (64 aa).

Residues 1-64 (MMITRGWEGW…LDPAISRSSS (64 aa)) form a disordered region. A compositionally biased stretch (gly residues) spans 16–28 (RGAGTGTGLGGPG).

This is an uncharacterized protein from Homo sapiens (Human).